The sequence spans 4652 residues: Low-density lipoprotein receptor-related protein 2 (4652 aa).

The first 25 residues, 1–25 (MERWAAAAACTLLLAFAACLAPASG), serve as a signal peptide directing secretion. Residues 26 to 4422 (RECLGNEFRC…SKGISPGTTV (4397 aa)) are Extracellular-facing. LDL-receptor class A domains follow at residues 27–63 (ECLG…IGCP), 66–104 (TCGS…QRCP), 108–144 (TCSS…INCR), 142–181 (NCRY…LNCT), 183–219 (RCLR…HSCS), 223–259 (PCKG…DGCE), and 267–308 (ECYP…RVCD). 21 disulfides stabilise this stretch: cysteine 28–cysteine 40, cysteine 35–cysteine 53, cysteine 47–cysteine 62, cysteine 67–cysteine 80, cysteine 74–cysteine 93, cysteine 87–cysteine 103, cysteine 109–cysteine 121, cysteine 116–cysteine 134, cysteine 128–cysteine 143, cysteine 143–cysteine 158, cysteine 153–cysteine 171, cysteine 165–cysteine 180, cysteine 184–cysteine 196, cysteine 191–cysteine 209, cysteine 203–cysteine 218, cysteine 224–cysteine 236, cysteine 231–cysteine 249, cysteine 243–cysteine 258, cysteine 268–cysteine 281, cysteine 275–cysteine 294, and cysteine 288–cysteine 307. 2 N-linked (GlcNAc...) asparagine glycosylation sites follow: asparagine 160 and asparagine 179. The N-linked (GlcNAc...) asparagine glycan is linked to asparagine 341. The region spanning 348 to 386 (DFNDCQIWGICDHFCEDRIGHHQCFCAEGYVLEHEQHCR) is the EGF-like 1; calcium-binding domain. Intrachain disulfides connect cysteine 352/cysteine 362, cysteine 358/cysteine 371, and cysteine 373/cysteine 385. N-linked (GlcNAc...) asparagine glycosylation is present at asparagine 388. LDL-receptor class B repeat units follow at residues 436-478 (SKVF…DWIN), 479-521 (NKLY…DPTV), 522-568 (GYLF…DLVA), 569-613 (KRVY…FEDN), 753-795 (NAIF…DWIS), 796-837 (RNLY…HPIA), 838-881 (GYIF…DWGS), and 882-925 (SRLY…FGEY). Residue asparagine 771 is glycosylated (N-linked (GlcNAc...) asparagine). The N-linked (GlcNAc...) asparagine glycan is linked to asparagine 866. N-linked (GlcNAc...) asparagine glycosylation is present at asparagine 1015. One can recognise an LDL-receptor class A 8 domain in the interval 1025-1061 (QCGALSFPCNNGRCVPLHYRCDGVDDCHDNSDEVQCG). 3 disulfides stabilise this stretch: cysteine 1026/cysteine 1038, cysteine 1033/cysteine 1051, and cysteine 1045/cysteine 1060. Asparagine 1064 carries N-linked (GlcNAc...) asparagine glycosylation. 7 consecutive LDL-receptor class A domains span residues 1066–1104 (SCAP…QNCS), 1110–1146 (SCRA…KRCD), 1150–1186 (TCSP…SACV), 1188–1225 (NCTD…IDCP), 1231–1269 (MCRQ…SGCP), 1272–1308 (TCPX…KDCP), and 1313–1351 (LCPS…PLCN). 9 disulfides stabilise this stretch: cysteine 1067–cysteine 1081, cysteine 1074–cysteine 1094, cysteine 1088–cysteine 1103, cysteine 1111–cysteine 1123, cysteine 1118–cysteine 1136, cysteine 1130–cysteine 1145, cysteine 1151–cysteine 1163, cysteine 1158–cysteine 1176, and cysteine 1170–cysteine 1185. N-linked (GlcNAc...) asparagine glycosylation occurs at asparagine 1102. The Ca(2+) site is built by tryptophan 1128, aspartate 1131, aspartate 1133, aspartate 1135, aspartate 1141, and glutamate 1142. Asparagine 1188 is a glycosylation site (N-linked (GlcNAc...) asparagine). Cystine bridges form between cysteine 1189-cysteine 1202, cysteine 1196-cysteine 1215, cysteine 1209-cysteine 1224, cysteine 1232-cysteine 1245, cysteine 1239-cysteine 1258, cysteine 1252-cysteine 1268, cysteine 1273-cysteine 1285, cysteine 1280-cysteine 1298, cysteine 1292-cysteine 1307, cysteine 1314-cysteine 1327, cysteine 1321-cysteine 1340, and cysteine 1334-cysteine 1350. Residues tyrosine 1207, aspartate 1210, valine 1212, aspartate 1214, aspartate 1220, and glutamate 1221 each coordinate Ca(2+). Residue asparagine 1329 is glycosylated (N-linked (GlcNAc...) asparagine). Asparagine 1385, asparagine 1452, asparagine 1498, and asparagine 1552 each carry an N-linked (GlcNAc...) asparagine glycan. 10 LDL-receptor class B repeats span residues 1480–1522 (GRIF…DWVG), 1523–1565 (RNLY…DPRV), 1568–1611 (RVIF…DYPT), 1612–1654 (RLLY…TIFE), 1655–1696 (DSIY…VHPA), 1789–1831 (QFLY…DWLS), 1832–1881 (RNLY…DPAK), 1882–1929 (GKLY…DIQE), 1930–1971 (QKLY…YGPY), and 1972–2012 (LYYA…YRRR). Asparagine 1677 and asparagine 1809 each carry an N-linked (GlcNAc...) asparagine glycan. N-linked (GlcNAc...) asparagine glycosylation occurs at asparagine 2053. LDL-receptor class B repeat units follow at residues 2105–2154 (GFVY…DWVA), 2155–2199 (GNLY…DPKN), 2200–2243 (RYLF…DHNS), 2244–2287 (GYIY…FGNS), 2429–2475 (NRIY…DWIG), 2476–2516 (RRIY…DPCQ), 2517–2560 (GYMY…DYKE), 2561–2602 (NLLY…YGQY), and 2603–2644 (IYWT…VVNN). Asparagine 2175 and asparagine 2222 each carry an N-linked (GlcNAc...) asparagine glycan. N-linked (GlcNAc...) asparagine glycosylation occurs at asparagine 2485. LDL-receptor class A domains follow at residues 2696 to 2734 (RCNS…TLCA), 2737 to 2773 (TCPP…SGCR), 2776 to 2815 (SCNI…KNCA), 2818 to 2857 (TCLP…IYCV), 2860 to 2897 (TCKN…ATCV), 2902 to 2941 (TCSS…HHCE), 2944 to 2986 (NCSS…QNCT), 2989 to 3025 (NCSG…RNCK), 3028 to 3066 (ACDE…HLCH), and 3071 to 3107 (TCPP…ERCG). Disulfide bonds link cysteine 2697/cysteine 2709, cysteine 2704/cysteine 2722, cysteine 2716/cysteine 2733, cysteine 2738/cysteine 2750, cysteine 2745/cysteine 2763, cysteine 2757/cysteine 2772, cysteine 2777/cysteine 2790, cysteine 2785/cysteine 2803, cysteine 2797/cysteine 2814, cysteine 2819/cysteine 2832, cysteine 2826/cysteine 2845, cysteine 2839/cysteine 2856, cysteine 2861/cysteine 2873, cysteine 2868/cysteine 2886, cysteine 2880/cysteine 2896, cysteine 2903/cysteine 2915, cysteine 2910/cysteine 2928, and cysteine 2922/cysteine 2940. An N-linked (GlcNAc...) asparagine glycan is attached at asparagine 2698. Asparagine 2778 is a glycosylation site (N-linked (GlcNAc...) asparagine). 2 N-linked (GlcNAc...) asparagine glycosylation sites follow: asparagine 2806 and asparagine 2807. Asparagine 2944 is a glycosylation site (N-linked (GlcNAc...) asparagine). Intrachain disulfides connect cysteine 2945-cysteine 2962, cysteine 2952-cysteine 2975, and cysteine 2969-cysteine 2985. N-linked (GlcNAc...) asparagine glycans are attached at residues asparagine 2984 and asparagine 2989. Intrachain disulfides connect cysteine 2990–cysteine 3002, cysteine 2997–cysteine 3015, cysteine 3009–cysteine 3024, cysteine 3029–cysteine 3041, cysteine 3036–cysteine 3054, cysteine 3048–cysteine 3065, cysteine 3072–cysteine 3084, cysteine 3079–cysteine 3097, and cysteine 3091–cysteine 3106. The N-linked (GlcNAc...) asparagine glycan is linked to asparagine 3122. The region spanning 3149–3189 (DIDECKETPSVCSQKCENLLGSYICKCAPGYTREPDGRSCR) is the EGF-like 2; calcium-binding domain. Cystine bridges form between cysteine 3153/cysteine 3164, cysteine 3160/cysteine 3173, and cysteine 3175/cysteine 3188. Residues asparagine 3208, asparagine 3254, asparagine 3312, and asparagine 3352 are each glycosylated (N-linked (GlcNAc...) asparagine). LDL-receptor class B repeat units lie at residues 3236–3278 (ERLY…DWVT), 3279–3321 (RKLY…DKPR), 3330–3373 (GYVY…DYTN), 3374–3417 (DLLY…FEDT), and 3418–3458 (IYWT…YHPY). Asparagine 3435 and asparagine 3444 each carry an N-linked (GlcNAc...) asparagine glycan. LDL-receptor class A domains lie at 3509–3547 (MCSS…NTCP), 3550–3588 (FCRL…VLCE), 3591–3629 (RCES…SHCA), 3632–3670 (TCLP…QECM), 3675–3713 (RCDN…QNCE), 3716–3753 (TCKP…ENCV), 3756–3792 (QCSE…RDCE), 3795–3831 (TCHP…ATCP), and 3839–3877 (YCPA…HLCL). Disulfide bonds link cysteine 3510-cysteine 3523, cysteine 3517-cysteine 3536, cysteine 3530-cysteine 3546, cysteine 3551-cysteine 3563, cysteine 3558-cysteine 3576, cysteine 3570-cysteine 3587, cysteine 3592-cysteine 3604, cysteine 3599-cysteine 3617, cysteine 3611-cysteine 3628, cysteine 3633-cysteine 3645, cysteine 3640-cysteine 3658, cysteine 3652-cysteine 3669, cysteine 3676-cysteine 3690, cysteine 3684-cysteine 3703, cysteine 3697-cysteine 3712, cysteine 3717-cysteine 3730, cysteine 3725-cysteine 3743, cysteine 3737-cysteine 3752, cysteine 3757-cysteine 3769, cysteine 3764-cysteine 3782, cysteine 3776-cysteine 3791, cysteine 3796-cysteine 3808, cysteine 3803-cysteine 3821, cysteine 3815-cysteine 3830, cysteine 3840-cysteine 3852, cysteine 3847-cysteine 3865, and cysteine 3859-cysteine 3876. An N-linked (GlcNAc...) asparagine glycan is attached at asparagine 3562. Residue asparagine 3678 is glycosylated (N-linked (GlcNAc...) asparagine). N-linked (GlcNAc...) asparagine glycosylation is present at asparagine 3878. 2 LDL-receptor class A domains span residues 3880–3919 (TCDL…ENCL) and 3925–3961 (PCTE…TGCN). 12 disulfide bridges follow: cysteine 3881/cysteine 3894, cysteine 3889/cysteine 3907, cysteine 3901/cysteine 3918, cysteine 3926/cysteine 3938, cysteine 3933/cysteine 3951, cysteine 3945/cysteine 3960, cysteine 3968/cysteine 3977, cysteine 3973/cysteine 3987, cysteine 3989/cysteine 4003, cysteine 4009/cysteine 4019, cysteine 4015/cysteine 4028, and cysteine 4030/cysteine 4045. Positions 3964 to 4004 (EERSCAENLCEHNCTQLIGGGFICSCRPGFKASSLNRNSCE) constitute an EGF-like 3 domain. N-linked (GlcNAc...) asparagine glycosylation is present at asparagine 3976. Positions 4005–4046 (DINECEQFGVCPQNCHNTKGSYECTCAEGFRSMSEHYGERCA) constitute an EGF-like 4; calcium-binding domain. The N-linked (GlcNAc...) asparagine glycan is linked to asparagine 4066. LDL-receptor class B repeat units follow at residues 4152-4194 (RHIY…NPKQ), 4195-4238 (GLMY…DYVN), and 4240-4281 (DRIY…FESQ). N-linked (GlcNAc...) asparagine glycosylation occurs at asparagine 4325. The EGF-like 5 domain occupies 4375-4409 (MPPPCRCMNEGNCYFDKNNLPKCKCPSGYMGEYCE). Cystine bridges form between cysteine 4379-cysteine 4387, cysteine 4381-cysteine 4397, and cysteine 4399-cysteine 4408. A helical membrane pass occupies residues 4423-4443 (AVLVTLILIIIIGGLVALGFF). At 4444–4652 (HYRKTGSILI…ANLVREDSEA (209 aa)) the chain is on the cytoplasmic side. The SH3-binding motif lies at 4450 to 4459 (SILISMPRLP). A PxLPxI/L motif 1; mediates interaction with ANKRA2 motif is present at residues 4453–4458 (ISMPRL). The PxLPxI/L motif 2; mediates interaction with ANKRA2 motif lies at 4456–4461 (PRLPSL). The residue at position 4460 (serine 4460) is a Phosphoserine. Positions 4518–4523 (FENPMY) match the Endocytosis signal motif. Polar residues predominate over residues 4536–4553 (TTTQVSESGNVYNKNYGS). Residues 4536-4652 (TTTQVSESGN…ANLVREDSEA (117 aa)) form a disordered region. Position 4568 is a phosphoserine (serine 4568). Residues 4588-4601 (QNTNFENPIYAETE) form an interaction with DAB2 region. The NPXY motif motif lies at 4594 to 4597 (NPIY). The SH2-binding motif lies at 4597-4600 (YAET). The SH3-binding motif lies at 4610-4621 (VTPPPSPSPPAK). A Phosphoserine modification is found at serine 4615. Over residues 4626 to 4636 (KGTTPAYSATE) the composition is skewed to polar residues. Threonine 4629 bears the Phosphothreonine mark. At serine 4650 the chain carries Phosphoserine.

Belongs to the LDLR family. Binds plasminogen, extracellular matrix components, plasminogen activator-plasminogen activator inhibitor type I complex, apolipoprotein E-enriched beta-VLDL, lipoprotein lipase, lactoferrin, CLU/clusterin and calcium. Forms a multimeric complex together with LRPAP1. Interacts (via PxLPxI/L motif) with ANKRA2 (via ankyrin repeats). Interacts with LRP2BP. Interacts (via NPXY motif) with DAB2; the interaction is not affected by tyrosine phosphorylation of the NPXY motif. Interacts with MB. Interacts with BMP4. Interacts with the Sonic hedgehog protein N-product which is the active product of SHH. Interacts with CST3 in a calcium-dependent manner. Interacts with the vitamin-D binding protein GC/DBP. Interacts with sex hormone-binding protein SHBG. Interacts with angiotensin-2. Also interacts with angiotensin 1-7. Interacts with APOM. Interacts with selenoprotein SEPP1. Interacts with LEP. Interacts with ALB. Interacts with the antiapoptotic protein BIRC5/survivin. Interacts with matrix metalloproteinase MMP2 in complex with metalloproteinase inhibitor TIMP1. In neurons, forms a trimeric complex with APP and APPB1/FE65. Interacts with LDLRAP1/ARH; mediates trafficking of LRP2 to the endocytic recycling compartment. Does not interact with beta-amyloid protein 40 alone but interacts with the complex composed of beta-amyloid protein 40 and CLU/APOJ. Interacts with MDK. In terms of processing, a fraction undergoes proteolytic cleavage of the extracellular domain at the cell membrane to generate a cytoplasmic tail fragment. This is internalized into the early endosome from where it trafficks in an LDLRAP1/ARH-dependent manner to the endocytic recycling compartment (ERC). In the ERC, it is further cleaved by gamma-secretase to release a fragment which translocates to the nucleus and mediates transcriptional repression. Post-translationally, N-glycosylation is required for ligand binding.

Its subcellular location is the apical cell membrane. The protein resides in the endosome lumen. It localises to the membrane. The protein localises to the clathrin-coated pit. It is found in the cell projection. Its subcellular location is the dendrite. The protein resides in the axon. Functionally, multiligand endocytic receptor. Acts together with CUBN to mediate endocytosis of high-density lipoproteins. Mediates receptor-mediated uptake of polybasic drugs such as aprotinin, aminoglycosides and polymyxin B. In the kidney, mediates the tubular uptake and clearance of leptin. Also mediates transport of leptin across the blood-brain barrier through endocytosis at the choroid plexus epithelium. Endocytosis of leptin in neuronal cells is required for hypothalamic leptin signaling and leptin-mediated regulation of feeding and body weight. Mediates endocytosis and subsequent lysosomal degradation of CST3 in kidney proximal tubule cells. Mediates renal uptake of 25-hydroxyvitamin D3 in complex with the vitamin D3 transporter GC/DBP. Mediates renal uptake of metallothionein-bound heavy metals. Together with CUBN, mediates renal reabsorption of myoglobin. Mediates renal uptake and subsequent lysosomal degradation of APOM. Plays a role in kidney selenium homeostasis by mediating renal endocytosis of selenoprotein SEPP1. Mediates renal uptake of the antiapoptotic protein BIRC5/survivin which may be important for functional integrity of the kidney. Mediates renal uptake of matrix metalloproteinase MMP2 in complex with metalloproteinase inhibitor TIMP1. Mediates endocytosis of Sonic hedgehog protein N-product (ShhN), the active product of SHH. Also mediates ShhN transcytosis. In the embryonic neuroepithelium, mediates endocytic uptake and degradation of BMP4, is required for correct SHH localization in the ventral neural tube and plays a role in patterning of the ventral telencephalon. Required at the onset of neurulation to sequester SHH on the apical surface of neuroepithelial cells of the rostral diencephalon ventral midline and to control PTCH1-dependent uptake and intracellular trafficking of SHH. During neurulation, required in neuroepithelial cells for uptake of folate bound to the folate receptor FOLR1 which is necessary for neural tube closure. In the adult brain, negatively regulates BMP signaling in the subependymal zone which enables neurogenesis to proceed. In astrocytes, mediates endocytosis of ALB which is required for the synthesis of the neurotrophic factor oleic acid. Involved in neurite branching. During optic nerve development, required for SHH-mediated migration and proliferation of oligodendrocyte precursor cells. Mediates endocytic uptake and clearance of SHH in the retinal margin which protects retinal progenitor cells from mitogenic stimuli and keeps them quiescent. Plays a role in reproductive organ development by mediating uptake in reproductive tissues of androgen and estrogen bound to the sex hormone binding protein SHBG. Mediates endocytosis of angiotensin-2. Also mediates endocytosis of angiotensis 1-7. Binds to the complex composed of beta-amyloid protein 40 and CLU/APOJ and mediates its endocytosis and lysosomal degradation. Required for embryonic heart development. Required for normal hearing, possibly through interaction with estrogen in the inner ear. The protein is Low-density lipoprotein receptor-related protein 2 of Sus scrofa (Pig).